The sequence spans 61 residues: Small ribosomal subunit protein uS14 (61 aa).

Zn(2+) contacts are provided by Cys-24, Cys-27, Cys-40, and Cys-43.

Belongs to the universal ribosomal protein uS14 family. Zinc-binding uS14 subfamily. As to quaternary structure, part of the 30S ribosomal subunit. Contacts proteins S3 and S10. Zn(2+) serves as cofactor.

Functionally, binds 16S rRNA, required for the assembly of 30S particles and may also be responsible for determining the conformation of the 16S rRNA at the A site. The polypeptide is Small ribosomal subunit protein uS14 (Helicobacter pylori (strain J99 / ATCC 700824) (Campylobacter pylori J99)).